Here is a 41-residue protein sequence, read N- to C-terminus: Pi-stichotoxin-Hcr5b (41 aa).

3 disulfides stabilise this stretch: Cys-4–Cys-37, Cys-6–Cys-30, and Cys-20–Cys-38.

Belongs to the sea anemone type 3 (BDS) potassium channel toxin family.

The protein localises to the secreted. Its subcellular location is the nematocyst. In terms of biological role, remarkably non-selective toxin, with activity on many different ion channels. Weakly and reversibly inhibits rat and human homomeric ASIC1 (isoform ASIC1a) (IC(50)=4.8 uM, and IC(50)=14.6 uM), and ASIC3 (IC(50)=15.9 uM). Molecular modeling interaction with ASIC1a suggests that this peptide hinders the collapse of acidic pockets and stabilizes nonconducting channels state. It activates several potassium channels including Kv1.1/KCNA1, Kv1.2/KCNA2, and drosophila Shaker IR. It moderately to potently inhibits potassium channels including Kv1.3/KCNA3, Kv1.4/KCNA4, Kv1.5/KCNA5, Kv1.6/KCNA6, Kv2.1/KCNB1, Kv4.2/KCND2, Kv7.1/KCNQ1, Kv7.2/Kv7.3 (KCNQ2/KCNQ3), Kv7.4/KCNQ4, hERG/KCNH2, and C.elegans QKT1. On sodium channels, it moderately to potently inhibits Nav1.1/SCN1A, Nav1.2/SCN2A, Nav1.3/SCN3A, Nav1.4/SCN4A, Nav1.5/SCN5A, Nav1.6/SCN8A, Nav1.7/SCN9A, Nav1.8/SCN10A, and B.germanica BgNav. It also moderately to potently inhibits Cav3.1/CACNA1G, Cav3.2/CACNA1H, and Cav3.3/CACNA1I. Significant shifts in the voltage-current relationship are observed on Kv and Nav, depending on the channel isoform, whereas the toxin does not seem to modulate the voltage-sensor domains of Cav channels, acting mainly as a pore blocker. Does not activate nicotinic acetylcholine receptors (nAChR), but potentiates ACh-elicited current of human alpha-7/CHRNA7 nAChR. Is also able to bind T.californica muscle-type nAChRs. In vivo, causes an excitatory effect in mice behavior. Also shows antihyperalgesic and analgesic activity in the acid-induced muscle pain mice model, and weak anti-inflammatory effect in models of acute local inflammation. The protein is Pi-stichotoxin-Hcr5b of Radianthus crispa (Leathery sea anemone).